A 286-amino-acid polypeptide reads, in one-letter code: Pre-mRNA-processing protein 45 (286 aa).

2 disordered regions span residues 111-146 (TNDINYIKYENPNPNPNPNPNPNQEQQQQSSSSSSK) and 253-286 (KQRNEIRQQKQLQEKRLRDEKIKEIANRSKRRRY). Residues 132–145 (PNQEQQQQSSSSSS) show a composition bias toward low complexity. Over residues 253–279 (KQRNEIRQQKQLQEKRLRDEKIKEIAN) the composition is skewed to basic and acidic residues.

This sequence belongs to the SNW family. Associated with the spliceosome.

The protein localises to the nucleus. In terms of biological role, involved in pre-mRNA splicing. This chain is Pre-mRNA-processing protein 45 (PRP45), found in Candida albicans (strain SC5314 / ATCC MYA-2876) (Yeast).